The chain runs to 390 residues: MDERAVLEELKKYRKMDLKYEDGAILGSMCTKPHPITKKISDMFFETNLGDPGLFRGTKKLEDEVINNIGKFLNNPNPFGYIISGGTEANITAMRAINNIAKAKRKNHKTTVIMPETAHFSFEKAREMMDLNLITPPLTKYYTMDLKYINDFIEDRNNKNDISVDGIVGIAGCTELGAIDNIKELSKIAEQNNIFLHVDAAFGGFVIPFLDDKYKLDNYCYEFDFSLNGVKSMTVDPHKMGLAPIPAGGILFRDKSFKKYLDVEAPYLTDIHQATIIGTRSGVGVASTWGVMKLFGEEGYKNLASECMDKTHYLVKEAKKLGFKPVIDPVLNIVALEDDNPEETSLKLRKMGWFISICKCVKALRIIVMPHVEKEHIDKFLGALTEVKKN.

Lys239 is modified (N6-(pyridoxal phosphate)lysine).

It belongs to the group II decarboxylase family. MfnA subfamily. Pyridoxal 5'-phosphate is required as a cofactor.

It catalyses the reaction L-tyrosine + H(+) = tyramine + CO2. It carries out the reaction L-aspartate + H(+) = beta-alanine + CO2. It functions in the pathway cofactor biosynthesis; methanofuran biosynthesis. Its pathway is cofactor biosynthesis; coenzyme A biosynthesis. In terms of biological role, catalyzes the decarboxylation of L-tyrosine to produce tyramine for methanofuran biosynthesis. Can also catalyze the decarboxylation of L-aspartate to produce beta-alanine for coenzyme A (CoA) biosynthesis. This Methanococcus aeolicus (strain ATCC BAA-1280 / DSM 17508 / OCM 812 / Nankai-3) protein is Probable L-tyrosine/L-aspartate decarboxylase.